A 226-amino-acid polypeptide reads, in one-letter code: Ribonuclease 3 (226 aa).

The region spanning 6 to 128 (TKKIQKVLGY…LIGSIYLDSN (123 aa)) is the RNase III domain. Glu41 contributes to the Mg(2+) binding site. Asp45 is a catalytic residue. Residues Asn114 and Glu117 each contribute to the Mg(2+) site. The active site involves Glu117. In terms of domain architecture, DRBM spans 155 to 225 (DPKTRLQEYL…AQKALIKLGV (71 aa)).

Belongs to the ribonuclease III family. As to quaternary structure, homodimer. Mg(2+) serves as cofactor.

The protein localises to the cytoplasm. The catalysed reaction is Endonucleolytic cleavage to 5'-phosphomonoester.. In terms of biological role, digests double-stranded RNA. Involved in the processing of primary rRNA transcript to yield the immediate precursors to the large and small rRNAs (23S and 16S). Processes some mRNAs, and tRNAs when they are encoded in the rRNA operon. Processes pre-crRNA and tracrRNA of type II CRISPR loci if present in the organism. The chain is Ribonuclease 3 from Buchnera aphidicola subsp. Acyrthosiphon pisum (strain 5A).